We begin with the raw amino-acid sequence, 357 residues long: Probable butyrate kinase 1 (357 aa).

The protein belongs to the acetokinase family.

It localises to the cytoplasm. The enzyme catalyses butanoate + ATP = butanoyl phosphate + ADP. The sequence is that of Probable butyrate kinase 1 from Caldanaerobacter subterraneus subsp. tengcongensis (strain DSM 15242 / JCM 11007 / NBRC 100824 / MB4) (Thermoanaerobacter tengcongensis).